The chain runs to 366 residues: Methylthioribose-1-phosphate isomerase (366 aa).

The active-site Proton donor is the Asp-260.

It belongs to the eIF-2B alpha/beta/delta subunits family. MtnA subfamily.

It is found in the cytoplasm. Its subcellular location is the nucleus. The catalysed reaction is 5-(methylsulfanyl)-alpha-D-ribose 1-phosphate = 5-(methylsulfanyl)-D-ribulose 1-phosphate. It functions in the pathway amino-acid biosynthesis; L-methionine biosynthesis via salvage pathway; L-methionine from S-methyl-5-thio-alpha-D-ribose 1-phosphate: step 1/6. Its function is as follows. Catalyzes the interconversion of methylthioribose-1-phosphate (MTR-1-P) into methylthioribulose-1-phosphate (MTRu-1-P). This is Methylthioribose-1-phosphate isomerase from Caenorhabditis briggsae.